A 114-amino-acid chain; its full sequence is UPF0342 protein LCA_0622 (114 aa).

This sequence belongs to the UPF0342 family.

This is UPF0342 protein LCA_0622 from Latilactobacillus sakei subsp. sakei (strain 23K) (Lactobacillus sakei subsp. sakei).